The sequence spans 1234 residues: DNA-directed RNA polymerase subunit beta (1234 aa).

The disordered stretch occupies residues 1189–1212 (VLSSQDNDYEEPEENDEEDELNLD). Residues 1195-1212 (NDYEEPEENDEEDELNLD) are compositionally biased toward acidic residues.

The protein belongs to the RNA polymerase beta chain family. As to quaternary structure, the RNAP catalytic core consists of 2 alpha, 1 beta, 1 beta' and 1 omega subunit. When a sigma factor is associated with the core the holoenzyme is formed, which can initiate transcription.

It carries out the reaction RNA(n) + a ribonucleoside 5'-triphosphate = RNA(n+1) + diphosphate. Functionally, DNA-dependent RNA polymerase catalyzes the transcription of DNA into RNA using the four ribonucleoside triphosphates as substrates. In Clostridium kluyveri (strain NBRC 12016), this protein is DNA-directed RNA polymerase subunit beta.